Here is a 94-residue protein sequence, read N- to C-terminus: MIKSELVQIIASRNPHLFQRDVENIVGAVFDEITNALAEGNRVELRGFGAFSVKNRPARSGRNPRTGETVDVEEKWVPFFKTGKKLRDRLNGAV.

The protein belongs to the bacterial histone-like protein family. Heterodimer of an alpha and a beta chain.

In terms of biological role, this protein is one of the two subunits of integration host factor, a specific DNA-binding protein that functions in genetic recombination as well as in transcriptional and translational control. The protein is Integration host factor subunit beta of Brucella abortus (strain S19).